Reading from the N-terminus, the 292-residue chain is tRNA (guanine-N(7)-)-methyltransferase (292 aa).

The segment at 1–52 (MGKIEATSKEEKLRVQKEAEARRRAYRDLKKEARQMQKEVKFDTDDNSELPK) is disordered. Residues Gly-106, 129–130 (EI), 166–167 (NA), and Cys-186 contribute to the S-adenosyl-L-methionine site. The active site involves Asp-189. 264 to 266 (TEE) contributes to the S-adenosyl-L-methionine binding site.

The protein belongs to the class I-like SAM-binding methyltransferase superfamily. TrmB family. As to quaternary structure, forms a complex with TRM82.

The protein localises to the nucleus. The catalysed reaction is guanosine(46) in tRNA + S-adenosyl-L-methionine = N(7)-methylguanosine(46) in tRNA + S-adenosyl-L-homocysteine. It participates in tRNA modification; N(7)-methylguanine-tRNA biosynthesis. Catalyzes the formation of N(7)-methylguanine at position 46 (m7G46) in tRNA. The polypeptide is tRNA (guanine-N(7)-)-methyltransferase (Debaryomyces hansenii (strain ATCC 36239 / CBS 767 / BCRC 21394 / JCM 1990 / NBRC 0083 / IGC 2968) (Yeast)).